The chain runs to 263 residues: Endonuclease 8 (263 aa).

P2 functions as the Schiff-base intermediate with DNA in the catalytic mechanism. Residue E3 is the Proton donor of the active site. K53 (proton donor; for beta-elimination activity) is an active-site residue. DNA contacts are provided by Q70, R125, and N169. Residues 229-263 form an FPG-type zinc finger; that stretch reads KLFHRDGEACERCGGIIEKTTLSSRPFYWCPHCQK. Catalysis depends on R253, which acts as the Proton donor; for delta-elimination activity.

Belongs to the FPG family. Requires Zn(2+) as cofactor.

The catalysed reaction is 2'-deoxyribonucleotide-(2'-deoxyribose 5'-phosphate)-2'-deoxyribonucleotide-DNA = a 3'-end 2'-deoxyribonucleotide-(2,3-dehydro-2,3-deoxyribose 5'-phosphate)-DNA + a 5'-end 5'-phospho-2'-deoxyribonucleoside-DNA + H(+). Its function is as follows. Involved in base excision repair of DNA damaged by oxidation or by mutagenic agents. Acts as a DNA glycosylase that recognizes and removes damaged bases. Has a preference for oxidized pyrimidines, such as thymine glycol, 5,6-dihydrouracil and 5,6-dihydrothymine. Has AP (apurinic/apyrimidinic) lyase activity and introduces nicks in the DNA strand. Cleaves the DNA backbone by beta-delta elimination to generate a single-strand break at the site of the removed base with both 3'- and 5'-phosphates. This chain is Endonuclease 8, found in Salmonella typhimurium (strain SL1344).